Reading from the N-terminus, the 141-residue chain is Hemoglobin subunit alpha-A (141 aa).

The region spanning valine 1–arginine 141 is the Globin domain. An O2-binding site is contributed by histidine 58. Residue histidine 87 participates in heme b binding.

The protein belongs to the globin family. As to quaternary structure, heterotetramer of two alpha chains and two beta chains. Red blood cells.

Its function is as follows. Involved in oxygen transport from the lung to the various peripheral tissues. In Branta canadensis (Canada goose), this protein is Hemoglobin subunit alpha-A (HBAA).